Here is a 227-residue protein sequence, read N- to C-terminus: NAD(P)H-quinone oxidoreductase subunit K, chloroplastic (227 aa).

[4Fe-4S] cluster-binding residues include Cys43, Cys44, Cys108, and Cys139.

Belongs to the complex I 20 kDa subunit family. NDH is composed of at least 16 different subunits, 5 of which are encoded in the nucleus. It depends on [4Fe-4S] cluster as a cofactor.

The protein localises to the plastid. The protein resides in the chloroplast thylakoid membrane. It carries out the reaction a plastoquinone + NADH + (n+1) H(+)(in) = a plastoquinol + NAD(+) + n H(+)(out). The catalysed reaction is a plastoquinone + NADPH + (n+1) H(+)(in) = a plastoquinol + NADP(+) + n H(+)(out). NDH shuttles electrons from NAD(P)H:plastoquinone, via FMN and iron-sulfur (Fe-S) centers, to quinones in the photosynthetic chain and possibly in a chloroplast respiratory chain. It has NADH- and deamino-NADH-specific dehydrogenase activity, using ferricyanide or quinones as acceptors. The immediate electron acceptor for the enzyme in this species is believed to be plastoquinone. Couples the redox reaction to proton translocation, and thus conserves the redox energy in a proton gradient. In Pisum sativum (Garden pea), this protein is NAD(P)H-quinone oxidoreductase subunit K, chloroplastic.